The following is a 445-amino-acid chain: Transcription termination factor MTERF15, mitochondrial (445 aa).

A mitochondrion-targeting transit peptide spans 1–25 (MASKLKTFINLRDYPITLFNQIRSL).

It belongs to the mTERF family.

The protein resides in the mitochondrion. In terms of biological role, transcription termination factor required for mitochondrial NAD2 intron 3 splicing and normal membrane respiratory chain Complex I activity. Essential for normal plant growth and development. Binds to RNA but not to double-stranded DNA. The protein is Transcription termination factor MTERF15, mitochondrial of Arabidopsis thaliana (Mouse-ear cress).